A 327-amino-acid polypeptide reads, in one-letter code: Aspartate carbamoyltransferase catalytic subunit (327 aa).

Residues Arg-73 and Thr-74 each contribute to the carbamoyl phosphate site. Residue Lys-101 participates in L-aspartate binding. Carbamoyl phosphate is bound by residues Arg-123, His-153, and Gln-156. Residues Arg-186 and Arg-241 each contribute to the L-aspartate site. 2 residues coordinate carbamoyl phosphate: Gly-282 and Pro-283.

It belongs to the aspartate/ornithine carbamoyltransferase superfamily. ATCase family. Heterododecamer (2C3:3R2) of six catalytic PyrB chains organized as two trimers (C3), and six regulatory PyrI chains organized as three dimers (R2).

It carries out the reaction carbamoyl phosphate + L-aspartate = N-carbamoyl-L-aspartate + phosphate + H(+). It participates in pyrimidine metabolism; UMP biosynthesis via de novo pathway; (S)-dihydroorotate from bicarbonate: step 2/3. Catalyzes the condensation of carbamoyl phosphate and aspartate to form carbamoyl aspartate and inorganic phosphate, the committed step in the de novo pyrimidine nucleotide biosynthesis pathway. In Acidithiobacillus ferrooxidans (strain ATCC 23270 / DSM 14882 / CIP 104768 / NCIMB 8455) (Ferrobacillus ferrooxidans (strain ATCC 23270)), this protein is Aspartate carbamoyltransferase catalytic subunit.